The chain runs to 335 residues: uncharacterized protein (335 aa).

This is an uncharacterized protein from Schizosaccharomyces pombe (strain 972 / ATCC 24843) (Fission yeast).